We begin with the raw amino-acid sequence, 248 residues long: PACRG-like protein (248 aa).

Met-1 is modified (N-acetylmethionine). Positions 1-29 (MQKSEGSGGTQLKNRATGNYDQRTSSSTQ) are enriched in polar residues. Residues 1-71 (MQKSEGSGGT…LNPKTINPFG (71 aa)) are disordered. The span at 39–49 (SKSSLSTSSPE) shows a compositional bias: low complexity. Ser-47 carries the post-translational modification Phosphoserine.

The polypeptide is PACRG-like protein (PACRGL) (Homo sapiens (Human)).